A 474-amino-acid polypeptide reads, in one-letter code: ATP synthase subunit beta (474 aa).

Residue 155 to 162 (GGAGVGKT) participates in ATP binding.

Belongs to the ATPase alpha/beta chains family. In terms of assembly, F-type ATPases have 2 components, CF(1) - the catalytic core - and CF(0) - the membrane proton channel. CF(1) has five subunits: alpha(3), beta(3), gamma(1), delta(1), epsilon(1). CF(0) has three main subunits: a(1), b(2) and c(9-12). The alpha and beta chains form an alternating ring which encloses part of the gamma chain. CF(1) is attached to CF(0) by a central stalk formed by the gamma and epsilon chains, while a peripheral stalk is formed by the delta and b chains.

It is found in the cell inner membrane. The enzyme catalyses ATP + H2O + 4 H(+)(in) = ADP + phosphate + 5 H(+)(out). In terms of biological role, produces ATP from ADP in the presence of a proton gradient across the membrane. The catalytic sites are hosted primarily by the beta subunits. In Sorangium cellulosum (strain So ce56) (Polyangium cellulosum (strain So ce56)), this protein is ATP synthase subunit beta.